Consider the following 694-residue polypeptide: Polynucleotide 3'-phosphatase ZDP (694 aa).

PARP-type zinc fingers lie at residues 50–132 (VVAE…EQCG) and 165–247 (VIAD…EVNK). Residues cysteine 62, cysteine 65, histidine 93, cysteine 96, cysteine 177, cysteine 180, histidine 208, and cysteine 211 each coordinate Zn(2+). The tract at residues 266–331 (AIADNELTEE…SPDSSKVISE (66 aa)) is disordered. The segment covering 302-321 (ESKKPASDEISEQKTKDVKN) has biased composition (basic and acidic residues). A compositionally biased stretch (polar residues) spans 322-331 (SPDSSKVISE). The segment at 328–410 (VISEYAKSSR…ALKELVQQCG (83 aa)) adopts a PARP-type 3 zinc-finger fold. Zn(2+) contacts are provided by cysteine 340, cysteine 343, histidine 371, and cysteine 374.

This sequence in the C-terminal section; belongs to the DNA 3' phosphatase family. In terms of assembly, interacts with ROS1 (via the central region). Binds to XRCC1.

It localises to the nucleus. It is found in the nucleoplasm. The enzyme catalyses a 3'end (2'-deoxyribonucleotide 3'-phosphate)-DNA + H2O = a 3'-end 2'-deoxyribonucleotide-DNA + phosphate. Activated by the presence of DNA. Stimulated by XRCC1. Its function is as follows. Nick-sensing 3'-phosphoesterase involved in a base excision repair pathway required for active DNA demethylation. The N-terminal DNA-binding domain binds specifically to gap sites and sharply bends the target DNA. Lacks 5'-kinase activity but is capable of 3'-phosphoglycolate end processing. Inactive on 3'-alpha,beta-unsaturated aldehyde (3'-dRP). Protects partially genes from transcriptional silencing by preventing promoter DNA hypermethylation. The protein is Polynucleotide 3'-phosphatase ZDP (ZDP) of Arabidopsis thaliana (Mouse-ear cress).